Consider the following 375-residue polypeptide: Histidine biosynthesis bifunctional protein HisB (375 aa).

The interval 1 to 168 (MTPILFVDRD…GIAHELADAP (168 aa)) is histidinol-phosphatase. Asp-8 serves as the catalytic Nucleophile. Residues Asp-8, Asp-10, and Asp-128 each coordinate Mg(2+). Asp-10 functions as the Proton donor in the catalytic mechanism. The imidazoleglycerol-phosphate dehydratase stretch occupies residues 169–375 (RRAVVQRNTK…SALPTTKGAL (207 aa)).

It in the N-terminal section; belongs to the histidinol-phosphatase family. In the C-terminal section; belongs to the imidazoleglycerol-phosphate dehydratase family. The cofactor is Mg(2+).

Its subcellular location is the cytoplasm. It catalyses the reaction D-erythro-1-(imidazol-4-yl)glycerol 3-phosphate = 3-(imidazol-4-yl)-2-oxopropyl phosphate + H2O. The enzyme catalyses L-histidinol phosphate + H2O = L-histidinol + phosphate. Its pathway is amino-acid biosynthesis; L-histidine biosynthesis; L-histidine from 5-phospho-alpha-D-ribose 1-diphosphate: step 6/9. The protein operates within amino-acid biosynthesis; L-histidine biosynthesis; L-histidine from 5-phospho-alpha-D-ribose 1-diphosphate: step 8/9. In Xanthomonas oryzae pv. oryzae (strain MAFF 311018), this protein is Histidine biosynthesis bifunctional protein HisB.